Here is a 556-residue protein sequence, read N- to C-terminus: ATP synthase subunit alpha 2 (556 aa).

177–184 (GDRATGKT) contacts ATP. The interval 514–556 (GGHAEDAADDMGGALDGEHASGDATSIAPTPPGGAEAGAPRKR) is disordered. Residues 546-556 (GGAEAGAPRKR) show a composition bias toward low complexity.

This sequence belongs to the ATPase alpha/beta chains family. As to quaternary structure, F-type ATPases have 2 components, CF(1) - the catalytic core - and CF(0) - the membrane proton channel. CF(1) has five subunits: alpha(3), beta(3), gamma(1), delta(1), epsilon(1). CF(0) has three main subunits: a(1), b(2) and c(9-12). The alpha and beta chains form an alternating ring which encloses part of the gamma chain. CF(1) is attached to CF(0) by a central stalk formed by the gamma and epsilon chains, while a peripheral stalk is formed by the delta and b chains.

Its subcellular location is the cell inner membrane. The enzyme catalyses ATP + H2O + 4 H(+)(in) = ADP + phosphate + 5 H(+)(out). In terms of biological role, produces ATP from ADP in the presence of a proton gradient across the membrane. The alpha chain is a regulatory subunit. This is ATP synthase subunit alpha 2 from Burkholderia thailandensis (strain ATCC 700388 / DSM 13276 / CCUG 48851 / CIP 106301 / E264).